Reading from the N-terminus, the 194-residue chain is Phosphoheptose isomerase (194 aa).

Positions 37–194 (IAKSFKNKNK…IIEKEMKKIN (158 aa)) constitute an SIS domain. 52–54 (NGG) lines the substrate pocket. 2 residues coordinate Zn(2+): His61 and Glu65. Substrate-binding positions include Glu65, 93 to 94 (ND), 119 to 121 (STS), Ser124, and Gln172. Gln172 and His180 together coordinate Zn(2+).

It belongs to the SIS family. GmhA subfamily. As to quaternary structure, homotetramer. It depends on Zn(2+) as a cofactor.

The protein resides in the cytoplasm. It catalyses the reaction 2 D-sedoheptulose 7-phosphate = D-glycero-alpha-D-manno-heptose 7-phosphate + D-glycero-beta-D-manno-heptose 7-phosphate. It functions in the pathway carbohydrate biosynthesis; D-glycero-D-manno-heptose 7-phosphate biosynthesis; D-glycero-alpha-D-manno-heptose 7-phosphate and D-glycero-beta-D-manno-heptose 7-phosphate from sedoheptulose 7-phosphate: step 1/1. Catalyzes the isomerization of sedoheptulose 7-phosphate in D-glycero-D-manno-heptose 7-phosphate. The polypeptide is Phosphoheptose isomerase (Buchnera aphidicola subsp. Schizaphis graminum (strain Sg)).